Here is a 378-residue protein sequence, read N- to C-terminus: Actin-related protein 2/3 complex subunit 1A (378 aa).

7 WD repeats span residues 8–47, 53–92, 97–138, 143–182, 203–242, 257–295, and 331–375; these read RFAESITCHAWSPDLSMVALCPNNTEVHIYKSLSQDHWER, KHDQIVSGIDWSSKSNKIVTVSHDRNSYVWSLEGAEWVPT, RLNR…WVSK, RHESSVTSVAWHPNNVLLATTSTDGKCRVFSTFIKGVDTK, LSYSWAFGVKWSPSGNTLAYVGHSSMIYFVDDVGPSPLAQ, ISEKMVIGVGYDSNPMVFASDDTGIWSFIRYIGEKKAAS, and VHDN…QELG.

This sequence belongs to the WD repeat ARPC1 family. As to quaternary structure, component of the Arp2/3 complex composed of ARP2, ARP3, ARPC1/p41-ARC, ARPC2/p34-ARC, ARPC3/p21-ARC, ARPC4/p20-ARC and ARPC5/p16-ARC. In terms of tissue distribution, expressed at low levels in all tissues with a relatively highest expression in inflorescences.

It localises to the cytoplasm. Its subcellular location is the cytoskeleton. Its function is as follows. Functions as a component of the Arp2/3 complex which is involved in regulation of actin polymerization and together with an activating nucleation-promoting factor (NPF) mediates the formation of branched actin networks. Arp2/3 complex plays a critical role in the control of cell morphogenesis via the modulation of cell polarity development. This is Actin-related protein 2/3 complex subunit 1A (ARPC1A) from Arabidopsis thaliana (Mouse-ear cress).